We begin with the raw amino-acid sequence, 407 residues long: Succinyl-diaminopimelate desuccinylase (407 aa).

The segment covering 1–10 (MSDIDNNLTS) has biased composition (polar residues). Residues 1 to 20 (MSDIDNNLTSQTHQQATHQQ) form a disordered region. Low complexity predominate over residues 11-20 (QTHQQATHQQ). Zn(2+) is bound at residue His-93. Residue Asp-95 is part of the active site. Residue Asp-126 participates in Zn(2+) binding. Residue Glu-160 is the Proton acceptor of the active site. Zn(2+) contacts are provided by Glu-161, Glu-189, and His-379.

This sequence belongs to the peptidase M20A family. DapE subfamily. As to quaternary structure, homodimer. Requires Zn(2+) as cofactor. It depends on Co(2+) as a cofactor.

The catalysed reaction is N-succinyl-(2S,6S)-2,6-diaminopimelate + H2O = (2S,6S)-2,6-diaminopimelate + succinate. It participates in amino-acid biosynthesis; L-lysine biosynthesis via DAP pathway; LL-2,6-diaminopimelate from (S)-tetrahydrodipicolinate (succinylase route): step 3/3. Functionally, catalyzes the hydrolysis of N-succinyl-L,L-diaminopimelic acid (SDAP), forming succinate and LL-2,6-diaminopimelate (DAP), an intermediate involved in the bacterial biosynthesis of lysine and meso-diaminopimelic acid, an essential component of bacterial cell walls. The polypeptide is Succinyl-diaminopimelate desuccinylase (Psychrobacter arcticus (strain DSM 17307 / VKM B-2377 / 273-4)).